Here is an 892-residue protein sequence, read N- to C-terminus: Alanine--tRNA ligase (892 aa).

4 residues coordinate Zn(2+): H565, H569, C675, and H679. Residues M852–A871 form a disordered region.

It belongs to the class-II aminoacyl-tRNA synthetase family. Zn(2+) is required as a cofactor.

The protein localises to the cytoplasm. It carries out the reaction tRNA(Ala) + L-alanine + ATP = L-alanyl-tRNA(Ala) + AMP + diphosphate. In terms of biological role, catalyzes the attachment of alanine to tRNA(Ala) in a two-step reaction: alanine is first activated by ATP to form Ala-AMP and then transferred to the acceptor end of tRNA(Ala). Also edits incorrectly charged Ser-tRNA(Ala) and Gly-tRNA(Ala) via its editing domain. This chain is Alanine--tRNA ligase, found in Parvibaculum lavamentivorans (strain DS-1 / DSM 13023 / NCIMB 13966).